We begin with the raw amino-acid sequence, 256 residues long: MALAKRIIPCLDVDNGRVVKGVKFENIRDAGDPVEIARRYDEQGADEITFLDITASVDGRDTTLHTVERMASQVFIPLTVGGGVRSVQDIRNLLNAGADKVSINTAAVFNPEFVGEAAERFGSQCIVVAIDAKKVSAPGEAPRWEIFTHGGRKPTGLDAVLWAKKMEDLGAGEILLTSMDQDGVKSGYDLGVTRAISEAVNVPVIASGGVGNLEHLAAGILEGKADAVLAASIFHFGEYTVPEAKAYLASRGIVVR.

Residues Asp-12 and Asp-131 contribute to the active site.

The protein belongs to the HisA/HisF family. As to quaternary structure, heterodimer of HisH and HisF.

The protein localises to the cytoplasm. It carries out the reaction 5-[(5-phospho-1-deoxy-D-ribulos-1-ylimino)methylamino]-1-(5-phospho-beta-D-ribosyl)imidazole-4-carboxamide + L-glutamine = D-erythro-1-(imidazol-4-yl)glycerol 3-phosphate + 5-amino-1-(5-phospho-beta-D-ribosyl)imidazole-4-carboxamide + L-glutamate + H(+). It participates in amino-acid biosynthesis; L-histidine biosynthesis; L-histidine from 5-phospho-alpha-D-ribose 1-diphosphate: step 5/9. IGPS catalyzes the conversion of PRFAR and glutamine to IGP, AICAR and glutamate. The HisF subunit catalyzes the cyclization activity that produces IGP and AICAR from PRFAR using the ammonia provided by the HisH subunit. In Pseudomonas paraeruginosa (strain DSM 24068 / PA7) (Pseudomonas aeruginosa (strain PA7)), this protein is Imidazole glycerol phosphate synthase subunit HisF.